A 645-amino-acid polypeptide reads, in one-letter code: Zinc finger protein 235 (645 aa).

The region spanning 8 to 86 (VTFRDVAVVF…TSHDVNKLAR (79 aa)) is the KRAB domain. 2 disordered regions span residues 112 to 144 (GAEQ…EFLS) and 255 to 280 (KKSP…SVHP). A compositionally biased stretch (polar residues) spans 129 to 144 (LPSNHSSSSDNQEFLS). 13 C2H2-type zinc fingers span residues 285-307 (YWCH…QRVH), 313-335 (YRCD…RRVH), 341-363 (YKCE…ERIH), 369-391 (YKCG…QRVH), 397-419 (YECN…QRVH), 425-447 (YKCE…QRVH), 453-475 (FHCS…QRIH), 481-503 (YRCE…QSVH), 509-531 (YKCG…HSVH), 537-559 (FKCN…QRVH), 565-587 (YKCD…QRIH), 593-615 (FKCE…QRVH), and 621-643 (YTCQ…QRVH).

This sequence belongs to the krueppel C2H2-type zinc-finger protein family.

The protein resides in the nucleus. In terms of biological role, may be involved in transcriptional regulation. The chain is Zinc finger protein 235 (Znf235) from Mus musculus (Mouse).